The sequence spans 463 residues: Metalloprotease slr0863 (463 aa).

Belongs to the peptidase U62 family.

Probable metalloprotease. This Synechocystis sp. (strain ATCC 27184 / PCC 6803 / Kazusa) protein is Metalloprotease slr0863.